Consider the following 534-residue polypeptide: MDSDSPILPLSNNPPAARTHDHSQRNNHARHVSSSGTTLFAPVKPATKKYNYRRVSPHGSYISPLEAMTVKLADTYSICNPKFQFSSEQNPRRPLTKPSEGVHNHGFDNVNHDYVLYVNDLLGTDEGRKYLILDTLGHGTFGQVARCQDLKTQQIVAIKVIKNKPAFYNQCVMEVSILELLNNKYDPEDKRHLIRLYDQFMHKNHLCLVFELLSINLYELIKQNQFRGLHLSLVRSFATQLLSCTSLLKQARIIHCDLKPENILLQDLSSPIVKVIDFGSACHERQTVYTYIQSRFYRSPEVILGLHYNCGIDMWSLGCILAELFLGLPLFPGNSEYNQLCRIVDMLGNPPTWMLEMGKNSKKYYNSGFVNGRKTYELKSIEQFSIENNKTEQPGKQYFGEKTLDAIVLNYPRRKTTPKLTPEEHEERLCFIDFIKQFLELNPLKRWTPDQAKNHPFITGASFSQYCIDKQKPLLTTQRTRNRSHTIGNQAVVPPSLQRASTYVSNEPEEFVHTRPLPQYYPPANENENVDEFF.

A disordered region spans residues 1-40 (MDSDSPILPLSNNPPAARTHDHSQRNNHARHVSSSGTTLF). Residues Ser-33, Ser-56, and Ser-60 each carry the phosphoserine modification. The disordered stretch occupies residues 85–104 (FSSEQNPRRPLTKPSEGVHN). In terms of domain architecture, Protein kinase spans 130–458 (YLILDTLGHG…PDQAKNHPFI (329 aa)). ATP-binding positions include 136 to 144 (LGHGTFGQV) and Lys-159. The active-site Proton acceptor is Asp-257. The residue at position 291 (Tyr-291) is a Phosphotyrosine.

The protein belongs to the protein kinase superfamily. Ser/Thr protein kinase family.

Its subcellular location is the cytoplasm. The protein resides in the cytoskeleton. The protein localises to the microtubule organizing center. It localises to the spindle pole body. It carries out the reaction L-seryl-[protein] + ATP = O-phospho-L-seryl-[protein] + ADP + H(+). It catalyses the reaction L-threonyl-[protein] + ATP = O-phospho-L-threonyl-[protein] + ADP + H(+). This is Serine/threonine-protein kinase ppk15 (ppk15) from Schizosaccharomyces pombe (strain 972 / ATCC 24843) (Fission yeast).